Here is a 914-residue protein sequence, read N- to C-terminus: WAG22 antigen (914 aa).

A PE domain is found at 1 to 93 (MSFVIAVPET…GGAYAAAEAA (93 aa)). 2 disordered regions span residues 412-431 (GGSGGAGGSGGPAGTAAGGA) and 895-914 (AGAGGAGGLVLGRDGQHGLT). A compositionally biased stretch (gly residues) spans 895–904 (AGAGGAGGLV).

It belongs to the mycobacterial PE family. PGRS subfamily.

The sequence is that of WAG22 antigen (wag22) from Mycobacterium bovis (strain ATCC BAA-935 / AF2122/97).